Consider the following 552-residue polypeptide: MPKEKYEPPDPRRMYTIMSSEEAANGKKSHWAELEISGKVRSLSSSLWSLTHLTALHLSDNSLSCIPSDIAKLHNLVYLDLSHNQIQSLPAELGNMVSLRELHLNYNQLRVLPFELGKLFQLQTLSLKGNPLTQDILNLCLEPDGTRRLLNYLLDNLSVSTEQPPPRSWIMLQEPDRTRPTALFSVMCYNVLCDKYATRQLYGYCPSWALNWDYRKKAIIQEILSCNADIISLQEVETEQYYSFFLVELKERGYNGFFSPKSRARTMSEQERKHVDGCAIFFKTEKFTLVQKHTVEFNQLAMANSEGSEAMLNRVMTKDNIGVAVLLELRKELIEMSSGKPHLGTEKQLILVANAHMHWDPEYSDVKLVQTMMFLSEVKNIIDKASRSLKSSVLGECGTIPLVLCADLNSLPDSGVVEYLSTGGVETNHKDFKELRYNESLTNFSCNGKNGMTNGRITHGFKLKSAYENGLMPYTNYTFDFKGIIDYIFYSKPQLNTLAILGPLDHHWLVENNISGCPHPLIPSDHFSLFAQLELLLPFLPQVNGIHLPGRR.

LRR repeat units lie at residues 52–73 (HLTALHLSDNSLSCIPSDIAKL), 75–96 (NLVYLDLSHNQIQSLPAELGNM), 98–120 (SLRELHLNYNQLRVLPFELGKLF), and 121–143 (QLQTLSLKGNPLTQDILNLCLEP). Residues 153–552 (LLDNLSVSTE…VNGIHLPGRR (400 aa)) form a nuclease domain region. Glutamate 235 provides a ligand contact to Mg(2+). Substrate is bound by residues glutamate 235, glutamate 271, histidine 356, and proline 361. Position 407 (aspartate 407) interacts with Mg(2+). Aspartate 407 (proton donor/acceptor) is an active-site residue. Residues asparagine 409, asparagine 476, and phenylalanine 481 each contribute to the substrate site.

It belongs to the CCR4/nocturin family. In terms of assembly, subunit of the CCR4-NOT core complex. Mg(2+) is required as a cofactor.

The protein resides in the cytoplasm. It localises to the nucleus. The catalysed reaction is Exonucleolytic cleavage of poly(A) to 5'-AMP.. Its function is as follows. Poly(A) nuclease involved in mRNA decay. Has 3'-5' RNase activity. The CCR4-NOT complex functions as a general transcription regulation complex. Enhances ligand-dependent transcriptional activity of nuclear hormone receptors. The protein is CCR4-NOT transcription complex subunit 6 (cnot6) of Xenopus laevis (African clawed frog).